Reading from the N-terminus, the 911-residue chain is Epithelial discoidin domain-containing receptor 1 (911 aa).

Positions 1–19 (MGTGTLSSLLLLLLLVTIG) are cleaved as a signal peptide. Topologically, residues 22–415 (DMKGHFDPAK…VAKAEGSPTA (394 aa)) are extracellular. One can recognise an F5/8 type C domain in the interval 32–186 (CRYALGMQDR…VCLRVELYGC (155 aa)). Disulfide bonds link C32–C186 and C75–C178. Residues 193–369 (LSYTAPVGQT…LFSEISFISD (177 aa)) form a DS-like domain region. Positions 213, 232, 235, 237, 255, and 257 each coordinate Ca(2+). An N-linked (GlcNAc...) asparagine glycan is attached at N213. An N-linked (GlcNAc...) asparagine glycan is attached at N262. A disulfide bridge links C305 with C350. Ca(2+) is bound by residues S362 and E363. Residues N372 and N392 are each glycosylated (N-linked (GlcNAc...) asparagine). The chain crosses the membrane as a helical span at residues 416-436 (ILIGCLVAIILLLLLIIALML). Topologically, residues 437–911 (WRLHWRRLLS…FLADDALNTV (475 aa)) are cytoplasmic. Residues 468 to 496 (ILINNRPGPREPPPYQEPRPRGTPPHSAP) form a disordered region. Over residues 477–494 (REPPPYQEPRPRGTPPHS) the composition is skewed to pro residues. The PPxY motif motif lies at 479–482 (PPPY). A phosphotyrosine; by autocatalysis mark is found at Y482, Y511, and Y518. One can recognise a Protein kinase domain in the interval 608–903 (LRFKEKLGEG…PPFAQLHRFL (296 aa)). ATP-binding positions include 614 to 622 (LGEGQFGEV) and K653. Y738 bears the Phosphotyrosine; by autocatalysis mark. D764 serves as the catalytic Proton acceptor. 3 positions are modified to phosphotyrosine; by autocatalysis: Y790, Y794, and Y795.

The protein belongs to the protein kinase superfamily. Tyr protein kinase family. Insulin receptor subfamily. As to quaternary structure, homodimer. Interacts (via PPxY motif) with WWC1 (via WW domains) in a collagen-regulated manner. Forms a tripartite complex with WWC1 and PRKCZ, but predominantly in the absence of collagen. Interacts (tyrosine phosphorylated) with SHC1. Interacts with SRC. Interacts with MYH9. Interacts with CDH1. Interacts with PTPN11. Interacts with NCK2. Autophosphorylated in response to fibrillar collagen binding. In terms of tissue distribution, detected in the cochlea and the organ of Corti in the inner ear. Isoform 1 is predominant and is expressed in developing embryo and adult brain. Isoform 2 is expressed in various epithelial cells.

The protein resides in the cell membrane. The catalysed reaction is L-tyrosyl-[protein] + ATP = O-phospho-L-tyrosyl-[protein] + ADP + H(+). Tyrosine kinase that functions as a cell surface receptor for fibrillar collagen and regulates cell attachment to the extracellular matrix, remodeling of the extracellular matrix, cell migration, differentiation, survival and cell proliferation. Collagen binding triggers a signaling pathway that involves SRC and leads to the activation of MAP kinases. Regulates remodeling of the extracellular matrix by up-regulation of the matrix metalloproteinases MMP2, MMP7 and MMP9, and thereby facilitates cell migration and wound healing, but also tumor cell invasion. Promotes smooth muscle cell migration, and thereby contributes to arterial wound healing. Phosphorylates PTPN11. Required for normal blastocyst implantation during pregnancy, for normal mammary gland differentiation and normal lactation. Required for normal ear morphology and normal hearing. The protein is Epithelial discoidin domain-containing receptor 1 (Ddr1) of Mus musculus (Mouse).